Here is a 292-residue protein sequence, read N- to C-terminus: 4-hydroxy-tetrahydrodipicolinate synthase (292 aa).

Thr-45 contributes to the pyruvate binding site. Tyr-133 functions as the Proton donor/acceptor in the catalytic mechanism. The Schiff-base intermediate with substrate role is filled by Lys-161. Ile-203 provides a ligand contact to pyruvate.

The protein belongs to the DapA family. As to quaternary structure, homodimer.

The protein resides in the cytoplasm. It carries out the reaction L-aspartate 4-semialdehyde + pyruvate = (2S,4S)-4-hydroxy-2,3,4,5-tetrahydrodipicolinate + H2O + H(+). It participates in amino-acid biosynthesis; L-lysine biosynthesis via DAP pathway; (S)-tetrahydrodipicolinate from L-aspartate: step 3/4. In terms of biological role, catalyzes the condensation of (S)-aspartate-beta-semialdehyde [(S)-ASA] and pyruvate to 4-hydroxy-tetrahydrodipicolinate (HTPA). In Ectopseudomonas mendocina (strain ymp) (Pseudomonas mendocina), this protein is 4-hydroxy-tetrahydrodipicolinate synthase.